The primary structure comprises 143 residues: Small ribosomal subunit protein uS12B (143 aa).

At P62 the chain carries 3,4-dihydroxyproline.

It belongs to the universal ribosomal protein uS12 family. In terms of assembly, component of the small ribosomal subunit (SSU). Mature yeast ribosomes consist of a small (40S) and a large (60S) subunit. The 40S small subunit contains 1 molecule of ribosomal RNA (18S rRNA) and at least 33 different proteins. The large 60S subunit contains 3 rRNA molecules (25S, 5.8S and 5S rRNA) and at least 46 different proteins. Post-translationally, hydroxylation at Pro-62 affects translation termination efficiency.

It is found in the cytoplasm. The protein resides in the nucleus. It localises to the nucleolus. Component of the ribosome, a large ribonucleoprotein complex responsible for the synthesis of proteins in the cell. The small ribosomal subunit (SSU) binds messenger RNAs (mRNAs) and translates the encoded message by selecting cognate aminoacyl-transfer RNA (tRNA) molecules. The large subunit (LSU) contains the ribosomal catalytic site termed the peptidyl transferase center (PTC), which catalyzes the formation of peptide bonds, thereby polymerizing the amino acids delivered by tRNAs into a polypeptide chain. The nascent polypeptides leave the ribosome through a tunnel in the LSU and interact with protein factors that function in enzymatic processing, targeting, and the membrane insertion of nascent chains at the exit of the ribosomal tunnel. The sequence is that of Small ribosomal subunit protein uS12B (rps2302) from Schizosaccharomyces pombe (strain 972 / ATCC 24843) (Fission yeast).